We begin with the raw amino-acid sequence, 199 residues long: Recombination protein RecR (199 aa).

The C4-type zinc-finger motif lies at 57 to 72 (CSSCRTFTEESLCPIC). A Toprim domain is found at 81-176 (DLICVVETPA…NVSRIAHGVP (96 aa)).

It belongs to the RecR family.

Its function is as follows. May play a role in DNA repair. It seems to be involved in an RecBC-independent recombinational process of DNA repair. It may act with RecF and RecO. The polypeptide is Recombination protein RecR (Shewanella loihica (strain ATCC BAA-1088 / PV-4)).